The primary structure comprises 404 residues: Ubiquitin-like modifier-activating enzyme 5 (404 aa).

Phosphoserine is present on serine 45. Glycine 83, aspartate 104, lysine 127, asparagine 150, and asparagine 184 together coordinate ATP. Residues cysteine 226 and cysteine 229 each coordinate Zn(2+). Cysteine 250 functions as the Glycyl thioester intermediate in the catalytic mechanism. Zn(2+) is bound by residues cysteine 303 and cysteine 308. The UFM1-interacting sequence (UIS) signature appears at 334-346 (IIHEDNEWGIELV). Positions 347 to 377 (SEVSEEELKNSSGPVPDLPEGITVAYTIPKK) are linker. Phosphoserine occurs at positions 358 and 393. The short motif at 389-404 (DSGESLEDLMAKMKNM) is the UFC1-binding sequence (UFC) element.

It belongs to the ubiquitin-activating E1 family. UBA5 subfamily. Homodimer; homodimerization is required for UFM1 activation. Interacts (via UIS motif) with UFM1; binds UFM1 via a trans-binding mechanism in which UFM1 interacts with distinct sites in both subunits of the UBA5 homodimer. Interacts (via C-terminus) with UFC1. Interacts (via UIS motif) with GABARAPL2 and, with lower affinity, with GABARAP and GABARAPL1.

The protein resides in the cytoplasm. It localises to the nucleus. The protein localises to the endoplasmic reticulum membrane. It is found in the golgi apparatus. In terms of biological role, E1-like enzyme which specifically catalyzes the first step in ufmylation. Activates UFM1 by first adenylating its C-terminal glycine residue with ATP, and thereafter linking this residue to the side chain of a cysteine residue in E1, yielding a UFM1-E1 thioester and free AMP. Activates UFM1 via a trans-binding mechanism, in which UFM1 interacts with distinct sites in both subunits of the UBA5 homodimer. Trans-binding also promotes stabilization of the UBA5 homodimer, and enhances ATP-binding. Transfer of UFM1 from UBA5 to the E2-like enzyme UFC1 also takes place using a trans mechanism. Ufmylation plays a key role in various processes, such as ribosome recycling, response to DNA damage, interferon response or reticulophagy (also called ER-phagy). Ufmylation is essential for erythroid differentiation of both megakaryocytes and erythrocytes. The polypeptide is Ubiquitin-like modifier-activating enzyme 5 (Pongo abelii (Sumatran orangutan)).